Consider the following 245-residue polypeptide: Nicotinamide/nicotinic acid mononucleotide adenylyltransferase 3 (245 aa).

S14 and F15 together coordinate NAD(+). H22 and K56 together coordinate ATP. Positions 90, 93, 134, and 136 each coordinate NAD(+). K139 contributes to the ATP binding site. NAD(+) is bound by residues L146, W147, R166, and N197. 202-205 (TYVR) is an ATP binding site.

Belongs to the eukaryotic NMN adenylyltransferase family. Homotetramer. Mg(2+) is required as a cofactor.

Its subcellular location is the mitochondrion. The catalysed reaction is beta-nicotinamide D-ribonucleotide + ATP + H(+) = diphosphate + NAD(+). It carries out the reaction nicotinate beta-D-ribonucleotide + ATP + H(+) = deamido-NAD(+) + diphosphate. The protein operates within cofactor biosynthesis; NAD(+) biosynthesis; NAD(+) from nicotinamide D-ribonucleotide: step 1/1. Its pathway is cofactor biosynthesis; NAD(+) biosynthesis; deamido-NAD(+) from nicotinate D-ribonucleotide: step 1/1. Its activity is regulated as follows. Activity is strongly inhibited by galotannin. Inhibited by P1-(adenosine-5')-P4-(nicotinic-acid-riboside-5')-tetraphosphate (Nap4AD). Its function is as follows. Catalyzes the formation of NAD(+) from nicotinamide mononucleotide (NMN) and ATP. Can also use the deamidated form; nicotinic acid mononucleotide (NaMN) as substrate with the same efficiency. Can use triazofurin monophosphate (TrMP) as substrate. Can also use GTP and ITP as nucleotide donors. Also catalyzes the reverse reaction, i.e. the pyrophosphorolytic cleavage of NAD(+). For the pyrophosphorolytic activity, can use NAD(+), NADH, NaAD, nicotinic acid adenine dinucleotide phosphate (NHD), nicotinamide guanine dinucleotide (NGD) as substrates. Fails to cleave phosphorylated dinucleotides NADP(+), NADPH and NaADP(+). Protects against axonal degeneration following injury. May be involved in the maintenance of axonal integrity. Also functions as a stress-response chaperone protein that prevents toxic aggregation of proteins; this function may be independent of its NAD(+) synthesis activity. The sequence is that of Nicotinamide/nicotinic acid mononucleotide adenylyltransferase 3 from Mus musculus (Mouse).